A 413-amino-acid chain; its full sequence is Protein CDKN2AIP homolog B (413 aa).

The XRN2-binding (XTBD) domain occupies 21-118 (LERVRGQCES…TTRDELVAKV (98 aa)). A disordered region spans residues 118–266 (VKKRGNSSSN…PTRRFTTEHT (149 aa)). Over residues 183 to 193 (NKREAHSRTDV) the composition is skewed to basic and acidic residues.

The protein belongs to the CARF family.

The protein localises to the nucleus. It localises to the nucleoplasm. May regulate DNA damage response and cell proliferation. In Xenopus laevis (African clawed frog), this protein is Protein CDKN2AIP homolog B (cdkn2aip-b).